The following is a 402-amino-acid chain: UPF0261 protein BP1203 (402 aa).

It belongs to the UPF0261 family.

The sequence is that of UPF0261 protein BP1203 from Bordetella pertussis (strain Tohama I / ATCC BAA-589 / NCTC 13251).